The sequence spans 354 residues: Guanine nucleotide-binding protein alpha-3 subunit (354 aa).

Glycine 2 carries the N-myristoyl glycine lipid modification. Cysteine 4 carries S-palmitoyl cysteine lipidation. A G-alpha domain is found at 33–354; sequence KECKILLLGS…TNALKDSGIL (322 aa). The segment at 36-49 is G1 motif; that stretch reads KILLLGSGESGKST. GTP is bound by residues 41-48, 177-183, 202-206, 271-274, and alanine 326; these read GSGESGKS, LRARSKT, DVGGQ, and NKID. 2 residues coordinate Mg(2+): serine 48 and threonine 183. The segment at 175-183 is G2 motif; sequence DVLRARSKT. The segment at 198-207 is G3 motif; the sequence is IHLFDVGGQR. The segment at 267 to 274 is G4 motif; that stretch reads ILFLNKID. The G5 motif stretch occupies residues 324-329; that stretch reads TQATDT.

It belongs to the G-alpha family. In terms of assembly, g proteins are composed of 3 units; alpha, beta and gamma. The alpha chain contains the guanine nucleotide binding site.

In terms of biological role, guanine nucleotide-binding proteins (G proteins) are involved as modulators or transducers in various transmembrane signaling systems. GPA3 plays an active role in transmission of the pheromone signal. In Mycosarcoma maydis (Corn smut fungus), this protein is Guanine nucleotide-binding protein alpha-3 subunit (GPA3).